A 369-amino-acid chain; its full sequence is Maltose/maltodextrin import ATP-binding protein MalK (369 aa).

Residues 4 to 234 enclose the ABC transporter domain; the sequence is VTLRNVCKAY…PQNRFVAGFI (231 aa). Residue 36–43 coordinates ATP; sequence GPSGCGKS.

Belongs to the ABC transporter superfamily. Maltooligosaccharide importer (TC 3.A.1.1.1) family. In terms of assembly, the complex is composed of two ATP-binding proteins (MalK), two transmembrane proteins (MalG and MalK) and a solute-binding protein (MalE).

Its subcellular location is the cell inner membrane. The enzyme catalyses D-maltose(out) + ATP + H2O = D-maltose(in) + ADP + phosphate + H(+). Functionally, part of the ABC transporter complex MalEFGK involved in maltose/maltodextrin import. Responsible for energy coupling to the transport system. The sequence is that of Maltose/maltodextrin import ATP-binding protein MalK from Photobacterium profundum (strain SS9).